The primary structure comprises 443 residues: Amino-acid acetyltransferase (443 aa).

Residues 296 to 435 (EQIRRATIND…KEMYNYQRRS (140 aa)) form the N-acetyltransferase domain.

This sequence belongs to the acetyltransferase family. ArgA subfamily. Homohexamer.

It is found in the cytoplasm. It catalyses the reaction L-glutamate + acetyl-CoA = N-acetyl-L-glutamate + CoA + H(+). It functions in the pathway amino-acid biosynthesis; L-arginine biosynthesis; N(2)-acetyl-L-ornithine from L-glutamate: step 1/4. In Enterobacter sp. (strain 638), this protein is Amino-acid acetyltransferase.